The chain runs to 358 residues: CCAAT/enhancer-binding protein alpha (358 aa).

A disordered region spans residues 1-55 (MESADFYEAEPRPPMSSHLQSPPHAPSNAAFGFPRGAGPAPPPAPPAAPEPLGGI). Residues 1–70 (MESADFYEAE…SIDISAYIDP (70 aa)) form a required to repress E2F1:TFDP1-mediated transcription, to inhibit cell cycle and to induce adipocyte differentiation region. The segment covering 29–38 (AAFGFPRGAG) has biased composition (low complexity). A compositionally biased stretch (pro residues) spans 39–49 (PAPPPAPPAAP). Residues 54 to 72 (GICEHETSIDISAYIDPAA) form a required for interaction with TRIB1 region. Residues 126 to 200 (PPGYGCAAAG…HASPAHLAAP (75 aa)) form a required to induce adipocyte differentiation region. Lysine 159 bears the N6-acetyllysine; alternate mark. A Glycyl lysine isopeptide (Lys-Gly) (interchain with G-Cter in SUMO); alternate cross-link involves residue lysine 159. Lysine 159 participates in a covalent cross-link: Glycyl lysine isopeptide (Lys-Gly) (interchain with G-Cter in SUMO2); alternate. 2 disordered regions span residues 176–195 (LFPY…ASPA) and 213–310 (TMHL…NVET). Pro residues predominate over residues 179–191 (YQPPPPPPPPHPH). The segment at 180-194 (QPPPPPPPPHPHASP) is required to functionally cooperate with SREBF1 in promoter activation. Serine 193 carries the post-translational modification Phosphoserine. Residues 220–234 (HPTPPPTPVPSPHPA) show a composition bias toward pro residues. 2 positions are modified to phosphothreonine; by GSK3: threonine 222 and threonine 226. The residue at position 230 (serine 230) is a Phosphoserine; by GSK3. An interaction with FOXO1 region spans residues 240–358 (AGLPGPGGSL…SLVKAMGNCA (119 aa)). Gly residues predominate over residues 261-271 (TGGGGGGGAGA). The span at 276–292 (KSVDKNSNEYRVRRERN) shows a compositional bias: basic and acidic residues. The 64-residue stretch at 282–345 (SNEYRVRRER…DTLRGIFRQL (64 aa)) folds into the bZIP domain. The DNA-binding element occupies 285–300 (YRVRRERNNIAVRKSR). Residues 286 to 313 (RVRRERNNIAVRKSRDKAKQRNVETQQK) are basic motif. A leucine-zipper region spans residues 317–345 (LTSDNDRLRKRVEQLSRELDTLRGIFRQL).

The protein belongs to the bZIP family. C/EBP subfamily. Binds DNA as a homodimer and as a heterodimer. Can form stable heterodimers with CEBPB, CEBPD, CEBPE and CEBPG. Can form stable homodimers (also isoform 2 and isoform 3 dimers) and heterodimers with CEBPB (with isoform 2 and isoform 3) and CEBPG. Interacts with PRDM16. Interacts with UBN1. Interacts with ZNF638; this interaction increases transcriptional activation. Interacts with the complex TFDP2:E2F1; the interaction prevents CEBPA binding to target gene promoters and represses its transcriptional activity. Interacts with RB1. Interacts (when phosphorylated at Ser-193) with CDK2, CDK4, E2F4 and SMARCA2. Interacts with SREBPF1. Interacts with FOXO1 (via the Fork-head domain); the interaction increases when FOXO1 is deacetylated. Interacts with SIX1. Interacts (via recognition sequence) with TRIB1. In terms of assembly, interacts with TAF1A and UBTF. As to quaternary structure, interacts with NPM1. Post-translationally, sumoylated, sumoylation blocks the inhibitory effect on cell proliferation by disrupting the interaction with SMARCA2. Phosphorylation at Ser-193 is required for interaction with CDK2, CDK4 and SWI/SNF complex leading to cell cycle inhibition. Dephosphorylated at Ser-193 by protein phosphatase 2A (PP2A) through PI3K/AKT signaling pathway regulation. Phosphorylation at Thr-222 and Thr-226 by GSK3 is constitutive in adipose tissue and lung. In liver, both Thr-222 and Thr-226 are phosphorylated only during feeding but not during fasting. Phosphorylation of the GSK3 consensus sites selectively decreases transactivation activity on IRE-controlled promoters. In terms of processing, ubiquitinated by COP1 upon interaction with TRIB1. Isoform 2 and isoform 3 are expressed in liver (at protein level).

It localises to the nucleus. The protein resides in the nucleolus. Functionally, transcription factor that coordinates proliferation arrest and the differentiation of myeloid progenitors, adipocytes, hepatocytes, and cells of the lung and the placenta. Binds directly to the consensus DNA sequence 5'-T[TG]NNGNAA[TG]-3' acting as an activator on distinct target genes. During early embryogenesis, plays essential and redundant functions with CEBPB. Essential for the transition from common myeloid progenitors (CMP) to granulocyte/monocyte progenitors (GMP). Critical for the proper development of the liver and the lung. Necessary for terminal adipocyte differentiation, is required for postnatal maintenance of systemic energy homeostasis and lipid storage. To regulate these different processes at the proper moment and tissue, interplays with other transcription factors and modulators. Down-regulates the expression of genes that maintain cells in an undifferentiated and proliferative state through E2F1 repression, which is critical for its ability to induce adipocyte and granulocyte terminal differentiation. Reciprocally E2F1 blocks adipocyte differentiation by binding to specific promoters and repressing CEBPA binding to its target gene promoters. Proliferation arrest also depends on a functional binding to SWI/SNF complex. In liver, regulates gluconeogenesis and lipogenesis through different mechanisms. To regulate gluconeogenesis, functionally cooperates with FOXO1 binding to IRE-controlled promoters and regulating the expression of target genes such as PCK1 or G6PC1. To modulate lipogenesis, interacts and transcriptionally synergizes with SREBF1 in promoter activation of specific lipogenic target genes such as ACAS2. In adipose tissue, seems to act as FOXO1 coactivator accessing to ADIPOQ promoter through FOXO1 binding sites. Can act as dominant-negative. Binds DNA and have transctivation activity, even if much less efficiently than isoform 2. Does not inhibit cell proliferation. Its function is as follows. Directly and specifically enhances ribosomal DNA transcription interacting with RNA polymerase I-specific cofactors and inducing histone acetylation. This is CCAAT/enhancer-binding protein alpha from Rattus norvegicus (Rat).